Consider the following 697-residue polypeptide: Beta-galactosidase 17 (697 aa).

Residues 1 to 35 form the signal peptide; that stretch reads MAMTSWPSTGRQRRHQLASMLLLVLVVVGIYVPVF. Catalysis depends on glutamate 218, which acts as the Proton donor. The active-site Nucleophile is the glutamate 301. Asparagine 333, asparagine 519, asparagine 573, asparagine 583, and asparagine 690 each carry an N-linked (GlcNAc...) asparagine glycan.

It belongs to the glycosyl hydrolase 35 family. In terms of tissue distribution, ubiquitous, with higher expression levels in roots and siliques.

It is found in the secreted. The protein resides in the extracellular space. It localises to the apoplast. The enzyme catalyses Hydrolysis of terminal non-reducing beta-D-galactose residues in beta-D-galactosides.. The protein is Beta-galactosidase 17 (BGAL17) of Arabidopsis thaliana (Mouse-ear cress).